A 304-amino-acid polypeptide reads, in one-letter code: Homoserine O-acetyltransferase (304 aa).

The active-site Acyl-thioester intermediate is cysteine 142. Positions 163 and 192 each coordinate substrate. Histidine 235 functions as the Proton acceptor in the catalytic mechanism. Residue glutamate 237 is part of the active site. Arginine 249 is a binding site for substrate.

This sequence belongs to the MetA family.

The protein localises to the cytoplasm. The enzyme catalyses L-homoserine + acetyl-CoA = O-acetyl-L-homoserine + CoA. It functions in the pathway amino-acid biosynthesis; L-methionine biosynthesis via de novo pathway; O-acetyl-L-homoserine from L-homoserine: step 1/1. Transfers an acetyl group from acetyl-CoA to L-homoserine, forming acetyl-L-homoserine. In Clostridium beijerinckii (strain ATCC 51743 / NCIMB 8052) (Clostridium acetobutylicum), this protein is Homoserine O-acetyltransferase.